A 442-amino-acid chain; its full sequence is Cell cycle checkpoint control protein RAD9B (442 aa).

Disordered regions lie at residues 370–392 and 422–442; these read EVPE…TEDV and QSLA…FSTF. Phosphoserine is present on Ser387.

The protein belongs to the rad9 family. In terms of assembly, interacts with HUS1, HUS1B, RAD1, RAD9A and RAD17.

The polypeptide is Cell cycle checkpoint control protein RAD9B (RAD9B) (Bos taurus (Bovine)).